We begin with the raw amino-acid sequence, 236 residues long: Orotidine 5'-phosphate decarboxylase (236 aa).

Substrate-binding positions include Asp14, Lys36, 63 to 72 (DLKFHDIPNT), Thr123, Arg184, Gln193, Gly213, and Arg214. Lys65 acts as the Proton donor in catalysis.

The protein belongs to the OMP decarboxylase family. Type 1 subfamily. Homodimer.

It carries out the reaction orotidine 5'-phosphate + H(+) = UMP + CO2. The protein operates within pyrimidine metabolism; UMP biosynthesis via de novo pathway; UMP from orotate: step 2/2. Catalyzes the decarboxylation of orotidine 5'-monophosphate (OMP) to uridine 5'-monophosphate (UMP). The chain is Orotidine 5'-phosphate decarboxylase from Marinobacter nauticus (strain ATCC 700491 / DSM 11845 / VT8) (Marinobacter aquaeolei).